Consider the following 187-residue polypeptide: Pyridoxal 5'-phosphate synthase subunit PdxT (187 aa).

47–49 (GES) is a binding site for L-glutamine. Residue C76 is the Nucleophile of the active site. L-glutamine contacts are provided by residues R102 and 128-129 (IR). Residues H165 and E167 each act as charge relay system in the active site.

The protein belongs to the glutaminase PdxT/SNO family. As to quaternary structure, in the presence of PdxS, forms a dodecamer of heterodimers. Only shows activity in the heterodimer.

The catalysed reaction is aldehydo-D-ribose 5-phosphate + D-glyceraldehyde 3-phosphate + L-glutamine = pyridoxal 5'-phosphate + L-glutamate + phosphate + 3 H2O + H(+). It catalyses the reaction L-glutamine + H2O = L-glutamate + NH4(+). Its pathway is cofactor biosynthesis; pyridoxal 5'-phosphate biosynthesis. Its function is as follows. Catalyzes the hydrolysis of glutamine to glutamate and ammonia as part of the biosynthesis of pyridoxal 5'-phosphate. The resulting ammonia molecule is channeled to the active site of PdxS. The chain is Pyridoxal 5'-phosphate synthase subunit PdxT from Methanococcus vannielii (strain ATCC 35089 / DSM 1224 / JCM 13029 / OCM 148 / SB).